A 587-amino-acid chain; its full sequence is Protein FRIGIDA-ESSENTIAL 1 (587 aa).

The C3H1-type zinc-finger motif lies at 96–123 (KRAALPCKFFAKGWCFNGVSCKFLHVKE). Disordered stretches follow at residues 264 to 346 (DMGS…SFTI), 368 to 421 (GDRP…HQET), and 467 to 492 (IKPAGHDSWHRSDGSSYKKTKKSDEI). The span at 294–304 (NGNSLSGSGSL) shows a compositional bias: low complexity. Positions 470–479 (AGHDSWHRSD) are enriched in basic and acidic residues.

Component of the transcription activator complex FRI-C composed of FRI, FRL1, SUF4, FLX and FES1. Interacts with FLX, (via C-terminus) with FRI (via C-terminus), and with RIN1, a component of the SWR1 chromatin-remodeling complex. Expressed in root and shoot apices and vasculature.

The protein localises to the nucleus. Its function is as follows. Transcriptional activator involved in the FRIGIDA-mediated vernalization pathway, but not in the autonomous flowering pathway. Acts cooperatively with FRI (FRIGIDA) or FRL1 (FRIGIDA-LIKE 1) to promote FLC (FLOWERING LOCUS C) expression. Required for the stabilization of the FRI-C complex. The sequence is that of Protein FRIGIDA-ESSENTIAL 1 (FES1) from Arabidopsis thaliana (Mouse-ear cress).